The following is a 462-amino-acid chain: Violaxanthin de-epoxidase, chloroplastic (462 aa).

A disulfide bridge connects residues cysteine 231 and cysteine 362. Positions 372 to 437 (IEKTVEEGER…RELSKEEMEF (66 aa)) form a coiled coil. The interval 380 to 391 (ERIIVKEVEEIE) is involved in the binding to the thylakoid membrane.

It belongs to the calycin superfamily. Lipocalin family. In terms of assembly, interacts in vitro with LTO1.

The protein localises to the plastid. Its subcellular location is the chloroplast thylakoid membrane. It carries out the reaction all-trans-violaxanthin + 2 L-ascorbate = all-trans-zeaxanthin + 2 L-dehydroascorbate + 2 H2O. Activity limited by low ascorbate availability. Feedback inhibition by zeaxanthin. Requires the presence of micelle-forming lipids such as monogalactosyldiacylglyceride (MGDG). Low concentration of bilayer forming lipids, such as digalactosyldiacylglyceride (DGDG) or phosphatidylcholine, supports a slower but nearly complete activity. 80% of the specific activity in lumenal chloroplast fractions is lost in vitro in the presence of reduced thioredoxin. In terms of biological role, part of the xanthophyll (or violaxanthin) cycle for controlling the concentration of zeaxanthin in chloroplasts. Catalyzes the two-step mono de-epoxidation reaction. Stereospecific for all-trans xanthophylls. Zeaxanthin induces the dissipation of excitation energy in the chlorophyll of the light-harvesting protein complex of photosystem II. This is Violaxanthin de-epoxidase, chloroplastic from Arabidopsis thaliana (Mouse-ear cress).